Reading from the N-terminus, the 219-residue chain is Cytochrome c biogenesis ATP-binding export protein CcmA (219 aa).

One can recognise an ABC transporter domain in the interval 10–218; the sequence is ISAVNLTCIR…TLDYSYDSAV (209 aa). Position 42-49 (42-49) interacts with ATP; the sequence is GPNGSGKT.

The protein belongs to the ABC transporter superfamily. CcmA exporter (TC 3.A.1.107) family. As to quaternary structure, the complex is composed of two ATP-binding proteins (CcmA) and two transmembrane proteins (CcmB).

The protein resides in the cell inner membrane. The enzyme catalyses heme b(in) + ATP + H2O = heme b(out) + ADP + phosphate + H(+). Functionally, part of the ABC transporter complex CcmAB involved in the biogenesis of c-type cytochromes; once thought to export heme, this seems not to be the case, but its exact role is uncertain. Responsible for energy coupling to the transport system. This is Cytochrome c biogenesis ATP-binding export protein CcmA from Colwellia psychrerythraea (strain 34H / ATCC BAA-681) (Vibrio psychroerythus).